The following is a 269-amino-acid chain: MLTLNEHLLNQVLLIAYQSGKHLQQFYQKQVHVELKEDNTPVTEADLFVSQFLTEKLTALFPNVPVLSEENCHISFEERKNWKEYWLIDPLDGTQQFINRTDQFSVLITLVRKNKPVLSVIHAPILSTTYYAMCDFGTFKKQLDQVKKLTKNTTNFDRPLRIAVGATTSQEKVRSILPKDFPCEFVVVGSSSLKSGLVAEGAVDCYVRLGQTGEWDTAGAEVLLGETHGAIFDSHFEPLTYNQRETLINPHFVMVGDQSFDWRSIFQFN.

5 residues coordinate Mg(2+): Glu69, Asp89, Leu91, Asp92, and Asp216. Residue Glu69 participates in substrate binding. Substrate is bound by residues 91 to 94 (LDGT) and Asp216.

Belongs to the inositol monophosphatase superfamily. CysQ family. It depends on Mg(2+) as a cofactor.

It localises to the cell inner membrane. The catalysed reaction is adenosine 3',5'-bisphosphate + H2O = AMP + phosphate. In terms of biological role, converts adenosine-3',5'-bisphosphate (PAP) to AMP. This Haemophilus influenzae (strain ATCC 51907 / DSM 11121 / KW20 / Rd) protein is 3'(2'),5'-bisphosphate nucleotidase CysQ.